The primary structure comprises 586 residues: Arginine--tRNA ligase (586 aa).

A 'HIGH' region motif is present at residues 131–141; sequence ANPTGPMHVGH.

It belongs to the class-I aminoacyl-tRNA synthetase family. As to quaternary structure, monomer.

The protein localises to the cytoplasm. The catalysed reaction is tRNA(Arg) + L-arginine + ATP = L-arginyl-tRNA(Arg) + AMP + diphosphate. The chain is Arginine--tRNA ligase from Azorhizobium caulinodans (strain ATCC 43989 / DSM 5975 / JCM 20966 / LMG 6465 / NBRC 14845 / NCIMB 13405 / ORS 571).